The primary structure comprises 134 residues: Acyl carrier protein, chloroplastic (134 aa).

The transit peptide at 1–51 (MATTFSASVSMQATSLATTTRISFQKPVLVSNHGRTNLSFNLSRTRLSISC) directs the protein to the chloroplast. The region spanning 55-130 (QETVEKVSEI…QAAELIEELM (76 aa)) is the Carrier domain. Residue Ser-90 is modified to O-(pantetheine 4'-phosphoryl)serine.

This sequence belongs to the acyl carrier protein (ACP) family. In terms of processing, 4'-phosphopantetheine is transferred from CoA to a specific serine of apo-ACP by acpS. This modification is essential for activity because fatty acids are bound in thioester linkage to the sulfhydryl of the prosthetic group. As to expression, seed.

The protein localises to the plastid. It localises to the chloroplast. It participates in lipid metabolism; fatty acid biosynthesis. Functionally, carrier of the growing fatty acid chain in fatty acid biosynthesis. The sequence is that of Acyl carrier protein, chloroplastic (ACL1.C1) from Brassica napus (Rape).